Consider the following 274-residue polypeptide: 3-methyl-2-oxobutanoate hydroxymethyltransferase (274 aa).

Mg(2+) contacts are provided by Asp49 and Asp88. Residues 49 to 50, Asp88, and Lys118 each bind 3-methyl-2-oxobutanoate; that span reads DS. Mg(2+) is bound at residue Glu120. Glu187 acts as the Proton acceptor in catalysis.

It belongs to the PanB family. As to quaternary structure, homodecamer; pentamer of dimers. It depends on Mg(2+) as a cofactor.

The protein localises to the cytoplasm. The catalysed reaction is 3-methyl-2-oxobutanoate + (6R)-5,10-methylene-5,6,7,8-tetrahydrofolate + H2O = 2-dehydropantoate + (6S)-5,6,7,8-tetrahydrofolate. It participates in cofactor biosynthesis; (R)-pantothenate biosynthesis; (R)-pantoate from 3-methyl-2-oxobutanoate: step 1/2. Catalyzes the reversible reaction in which hydroxymethyl group from 5,10-methylenetetrahydrofolate is transferred onto alpha-ketoisovalerate to form ketopantoate. The polypeptide is 3-methyl-2-oxobutanoate hydroxymethyltransferase (Rhodopseudomonas palustris (strain BisB5)).